The primary structure comprises 292 residues: Small ribosomal subunit biogenesis GTPase RsgA (292 aa).

The 158-residue stretch at 64–221 folds into the CP-type G domain; the sequence is RSELFRPAVA…LVDTPGFSSL (158 aa). GTP is bound by residues 113-116 and 164-172; these read NKMD and GPSGVGKST. The Zn(2+) site is built by C245, C250, H252, and C258.

It belongs to the TRAFAC class YlqF/YawG GTPase family. RsgA subfamily. As to quaternary structure, monomer. Associates with 30S ribosomal subunit, binds 16S rRNA. Zn(2+) is required as a cofactor.

It localises to the cytoplasm. Functionally, one of several proteins that assist in the late maturation steps of the functional core of the 30S ribosomal subunit. Helps release RbfA from mature subunits. May play a role in the assembly of ribosomal proteins into the subunit. Circularly permuted GTPase that catalyzes slow GTP hydrolysis, GTPase activity is stimulated by the 30S ribosomal subunit. The sequence is that of Small ribosomal subunit biogenesis GTPase RsgA from Clostridium botulinum (strain ATCC 19397 / Type A).